The following is a 115-amino-acid chain: Large ribosomal subunit protein bL19 (115 aa).

This sequence belongs to the bacterial ribosomal protein bL19 family.

This protein is located at the 30S-50S ribosomal subunit interface and may play a role in the structure and function of the aminoacyl-tRNA binding site. This chain is Large ribosomal subunit protein bL19, found in Desulfovibrio desulfuricans (strain ATCC 27774 / DSM 6949 / MB).